The sequence spans 146 residues: Aspartate 1-decarboxylase (146 aa).

The Schiff-base intermediate with substrate; via pyruvic acid role is filled by serine 25. Residue serine 25 is modified to Pyruvic acid (Ser). Threonine 57 serves as a coordination point for substrate. The active-site Proton donor is tyrosine 58. A substrate-binding site is contributed by 73–75; it reads GPA.

It belongs to the PanD family. In terms of assembly, heterooctamer of four alpha and four beta subunits. Requires pyruvate as cofactor. Is synthesized initially as an inactive proenzyme, which is activated by self-cleavage at a specific serine bond to produce a beta-subunit with a hydroxyl group at its C-terminus and an alpha-subunit with a pyruvoyl group at its N-terminus.

It is found in the cytoplasm. The catalysed reaction is L-aspartate + H(+) = beta-alanine + CO2. The protein operates within cofactor biosynthesis; (R)-pantothenate biosynthesis; beta-alanine from L-aspartate: step 1/1. Functionally, catalyzes the pyruvoyl-dependent decarboxylation of aspartate to produce beta-alanine. The polypeptide is Aspartate 1-decarboxylase (Salinibacter ruber (strain DSM 13855 / M31)).